Consider the following 710-residue polypeptide: Polyribonucleotide nucleotidyltransferase (710 aa).

2 residues coordinate Mg(2+): Asp-488 and Asp-494. A KH domain is found at 555–614; that stretch reads PRIETITIPTDKIRDVIGSGGKVIREIVETTGAKVDVNDDGVIKVSSSDGASIKAALDWI. The S1 motif domain occupies 624-692; sequence GQIYKGKVVK…DRGKVRLSMK (69 aa).

It belongs to the polyribonucleotide nucleotidyltransferase family. Mg(2+) is required as a cofactor.

The protein localises to the cytoplasm. It catalyses the reaction RNA(n+1) + phosphate = RNA(n) + a ribonucleoside 5'-diphosphate. Functionally, involved in mRNA degradation. Catalyzes the phosphorolysis of single-stranded polyribonucleotides processively in the 3'- to 5'-direction. The polypeptide is Polyribonucleotide nucleotidyltransferase (Maricaulis maris (strain MCS10) (Caulobacter maris)).